Here is a 133-residue protein sequence, read N- to C-terminus: Pheromone-regulated membrane protein 3 (133 aa).

The Nuclear segment spans residues 1-104 (MTAMKEDNAA…SKVQRENKGS (104 aa)). Residues 36–100 (ADGFVINKAK…DASESKVQRE (65 aa)) form a disordered region. Residues 69-75 (GRVRKHK) carry the Bipartite nuclear localization signal motif. Positions 90–100 (KDASESKVQRE) are enriched in basic and acidic residues. The chain crosses the membrane as a helical span at residues 105 to 127 (FYQGAIFGSFLGAAVTTVLSNLA). The Perinuclear space segment spans residues 128–133 (VKALQN).

In terms of assembly, interacts with KAR5.

Its subcellular location is the nucleus outer membrane. It localises to the cytoplasm. It is found in the cytoskeleton. The protein localises to the microtubule organizing center. The protein resides in the spindle pole body. Functionally, required for the fusion of nuclear envelopes during mating, ensuring proper karyogamy. Plays a role in the initiation of outer nuclear envelope fusion. The protein is Pheromone-regulated membrane protein 3 (PRM3) of Saccharomyces cerevisiae (strain ATCC 204508 / S288c) (Baker's yeast).